The following is a 627-amino-acid chain: Carene synthase, chloroplastic (627 aa).

The N-terminal 36 residues, Met-1–Val-36, are a transit peptide targeting the chloroplast. Mg(2+) contacts are provided by Asp-378, Asp-382, and Asp-530. Positions Asp-378–Asp-382 match the DDXXD motif motif.

The protein belongs to the terpene synthase family. Tpsd subfamily. Mg(2+) is required as a cofactor. Mn(2+) serves as cofactor.

The protein resides in the plastid. It is found in the chloroplast. It carries out the reaction (2E)-geranyl diphosphate = (+)-car-3-ene + diphosphate. It functions in the pathway terpene metabolism; oleoresin biosynthesis. In terms of biological role, terpene synthase (TPS) involved in defensive oleoresin formation in conifers in response to insect attack or other injury. The sequence is that of Carene synthase, chloroplastic (3CAR) from Picea glauca (White spruce).